The following is a 388-amino-acid chain: Succinate--CoA ligase [ADP-forming] subunit beta (388 aa).

One can recognise an ATP-grasp domain in the interval 9–244 (KALFAEYGLP…PSQDDAREAH (236 aa)). ATP-binding positions include lysine 46, 53–55 (GRG), glutamate 99, threonine 102, and glutamate 107. Mg(2+) is bound by residues asparagine 199 and aspartate 213. Substrate contacts are provided by residues asparagine 264 and 321-323 (GIV).

Belongs to the succinate/malate CoA ligase beta subunit family. As to quaternary structure, heterotetramer of two alpha and two beta subunits. It depends on Mg(2+) as a cofactor.

The enzyme catalyses succinate + ATP + CoA = succinyl-CoA + ADP + phosphate. It carries out the reaction GTP + succinate + CoA = succinyl-CoA + GDP + phosphate. It participates in carbohydrate metabolism; tricarboxylic acid cycle; succinate from succinyl-CoA (ligase route): step 1/1. Its function is as follows. Succinyl-CoA synthetase functions in the citric acid cycle (TCA), coupling the hydrolysis of succinyl-CoA to the synthesis of either ATP or GTP and thus represents the only step of substrate-level phosphorylation in the TCA. The beta subunit provides nucleotide specificity of the enzyme and binds the substrate succinate, while the binding sites for coenzyme A and phosphate are found in the alpha subunit. The sequence is that of Succinate--CoA ligase [ADP-forming] subunit beta from Shewanella loihica (strain ATCC BAA-1088 / PV-4).